The following is a 488-amino-acid chain: UDP-N-acetylmuramate--L-alanine ligase (488 aa).

ATP is bound at residue 127–133 (GTHGKTT).

The protein belongs to the MurCDEF family.

It localises to the cytoplasm. The enzyme catalyses UDP-N-acetyl-alpha-D-muramate + L-alanine + ATP = UDP-N-acetyl-alpha-D-muramoyl-L-alanine + ADP + phosphate + H(+). It participates in cell wall biogenesis; peptidoglycan biosynthesis. In terms of biological role, cell wall formation. This Shewanella baltica (strain OS223) protein is UDP-N-acetylmuramate--L-alanine ligase.